The primary structure comprises 114 residues: Probable acid stress chaperone HdeA (114 aa).

The signal sequence occupies residues 1–26 (MIKTLFNKNTALAAVAILALSGSAMA). A disulfide bridge connects residues cysteine 46 and cysteine 94.

The protein belongs to the HdeA family.

It localises to the periplasm. Required for optimal acid stress protection. Exhibits a chaperone-like activity only at low pH by suppressing non-specifically the aggregation of denaturated periplasmic proteins. The sequence is that of Probable acid stress chaperone HdeA from Brucella ovis (strain ATCC 25840 / 63/290 / NCTC 10512).